The primary structure comprises 630 residues: Probable potassium transport system protein Kup (630 aa).

12 helical membrane-spanning segments follow: residues 17-37, 51-71, 105-125, 144-164, 175-195, 218-238, 255-275, 283-303, 344-364, 374-394, 402-422, and 428-448; these read LAIA…LYSL, PSAI…VVGI, ITGL…GDAV, PQLS…LFWI, LFGP…IYHI, VLLA…AEAL, YVLV…LLLL, PFFL…STVA, IYVP…VIGF, YGIA…VVMV, LLVA…FGAN, and QGGW…MTWY.

It belongs to the HAK/KUP transporter (TC 2.A.72) family.

It localises to the cell inner membrane. It carries out the reaction K(+)(in) + H(+)(in) = K(+)(out) + H(+)(out). Its function is as follows. Transport of potassium into the cell. Likely operates as a K(+):H(+) symporter. This Burkholderia mallei (strain NCTC 10247) protein is Probable potassium transport system protein Kup.